A 30-amino-acid polypeptide reads, in one-letter code: M-poneritoxin-Ng3a (30 aa).

As to expression, expressed by the venom gland.

It localises to the secreted. In terms of biological role, shows a broad spectrum of activity against both Gram-positive and Gram-negative bacteria. Also has antimicrobial activity against S.cerevisiae. Has insecticidal and non-hemolytic activity. This chain is M-poneritoxin-Ng3a, found in Neoponera goeldii (Ponerine ant).